The chain runs to 129 residues: Follitropin subunit beta (129 aa).

Positions 1 to 18 (MKSVQFCFLFCCWRAICC) are cleaved as a signal peptide. 6 disulfide bridges follow: Cys21–Cys69, Cys35–Cys84, Cys38–Cys122, Cys46–Cys100, Cys50–Cys102, and Cys105–Cys112. 2 N-linked (GlcNAc...) asparagine glycosylation sites follow: Asn25 and Asn42.

Belongs to the glycoprotein hormones subunit beta family. Heterodimer. The active follitropin is a heterodimer composed of an alpha chain/CGA shared with other hormones and a unique beta chain/FSHB shown here.

It localises to the secreted. Functionally, together with the alpha chain CGA constitutes follitropin, the follicle-stimulating hormone, and provides its biological specificity to the hormone heterodimer. Binds FSHR, a G protein-coupled receptor, on target cells to activate downstream signaling pathways. Follitropin is involved in follicle development and spermatogenesis in reproductive organs. This Capra hircus (Goat) protein is Follitropin subunit beta (FSHB).